Consider the following 265-residue polypeptide: Tryptophan 2,3-dioxygenase (265 aa).

Substrate is bound by residues 38 to 42 (FIVVH) and R104. Heme is bound at residue H223. T237 lines the substrate pocket.

This sequence belongs to the tryptophan 2,3-dioxygenase family. In terms of assembly, homotetramer. Heme is required as a cofactor.

It catalyses the reaction L-tryptophan + O2 = N-formyl-L-kynurenine. Its pathway is amino-acid degradation; L-tryptophan degradation via kynurenine pathway; L-kynurenine from L-tryptophan: step 1/2. Heme-dependent dioxygenase that catalyzes the oxidative cleavage of the L-tryptophan (L-Trp) pyrrole ring and converts L-tryptophan to N-formyl-L-kynurenine. Catalyzes the oxidative cleavage of the indole moiety. This chain is Tryptophan 2,3-dioxygenase, found in Anaeromyxobacter dehalogenans (strain 2CP-C).